The following is an 86-amino-acid chain: Small ribosomal subunit protein uS17 (86 aa).

Belongs to the universal ribosomal protein uS17 family. In terms of assembly, part of the 30S ribosomal subunit.

In terms of biological role, one of the primary rRNA binding proteins, it binds specifically to the 5'-end of 16S ribosomal RNA. This is Small ribosomal subunit protein uS17 from Lactococcus lactis subsp. cremoris (strain MG1363).